The primary structure comprises 414 residues: Putative dipeptidase TRV_05564 (414 aa).

The N-terminal stretch at 1 to 20 (MAALFVSLLALTSLVPVQGA) is a signal peptide. Zn(2+)-binding residues include His-45, Asp-47, and Glu-157. A disulfide bridge links Cys-96 with Cys-186. His-184 provides a ligand contact to substrate. Zn(2+) contacts are provided by His-228 and His-249. Residues Arg-260 and Asp-320 each contribute to the substrate site. An N-linked (GlcNAc...) asparagine glycan is attached at Asn-392.

This sequence belongs to the metallo-dependent hydrolases superfamily. Peptidase M19 family. It depends on Zn(2+) as a cofactor.

The enzyme catalyses an L-aminoacyl-L-amino acid + H2O = 2 an L-alpha-amino acid. Hydrolyzes a wide range of dipeptides. This chain is Putative dipeptidase TRV_05564, found in Trichophyton verrucosum (strain HKI 0517).